The primary structure comprises 114 residues: Mobility group protein 1A (114 aa).

The segment at residues 5–71 (PKRPLSAYML…EYEKAMKEFE (67 aa)) is a DNA-binding region (HMG box). A disordered region spans residues 69-114 (EFERNGGDKSSGASTKKRGKAAEKKKPAKKSKKKDSEDDEEEDESD). A compositionally biased stretch (acidic residues) spans 105–114 (EDDEEEDESD).

This sequence belongs to the HMGB family.

It localises to the nucleus. The protein resides in the chromosome. Functionally, found in condensed chromomeres. Binds preferentially to AT-rich DNA. This is Mobility group protein 1A (HMG1A) from Chironomus tentans (Midge).